The sequence spans 92 residues: Long neurotoxin 2 (92 aa).

The first 21 residues, 1–21, serve as a signal peptide directing secretion; the sequence is MKTLLLTLVVVTIVCLDLGYT. Intrachain disulfides connect C24–C42, C35–C63, C48–C52, C67–C79, and C80–C85.

It belongs to the three-finger toxin family. Long-chain subfamily. Type II alpha-neurotoxin sub-subfamily. Expressed by the venom gland.

The protein resides in the secreted. Functionally, binds with high affinity to muscular (alpha-1/CHRNA1) and neuronal (alpha-7/CHRNA7) nicotinic acetylcholine receptor (nAChR) and inhibits acetylcholine from binding to the receptor, thereby impairing neuromuscular and neuronal transmission. The sequence is that of Long neurotoxin 2 from Oxyuranus microlepidotus (Inland taipan).